Consider the following 554-residue polypeptide: Putative F-box/LRR-repeat protein 8 (554 aa).

An F-box domain is found at tyrosine 71–leucine 117. LRR repeat units lie at residues alanine 119–serine 144, serine 148–glycine 173, cysteine 174–serine 199, lysine 205–arginine 224, lysine 250–arginine 275, arginine 301–lysine 325, threonine 326–glycine 351, threonine 354–glycine 379, threonine 383–glycine 404, serine 405–isoleucine 428, asparagine 430–lysine 455, and cysteine 456–alanine 480.

In Arabidopsis thaliana (Mouse-ear cress), this protein is Putative F-box/LRR-repeat protein 8 (FBL8).